The chain runs to 136 residues: MKKLLMVILGIALIGMAYAFPPWMAYQTQTTENTDINPVDILKTAEVVQHTTPFGYNLSHLEIDGKIVGVLWKDVDLSKLEVGEPFNTPFGEKYPLYYDRELVGFIFTNHPASHYGYGMRGGYGCHCHCGCCCWQQ.

An N-terminal signal peptide occupies residues 1-19 (MKKLLMVILGIALIGMAYA).

This is an uncharacterized protein from Methanocaldococcus jannaschii (strain ATCC 43067 / DSM 2661 / JAL-1 / JCM 10045 / NBRC 100440) (Methanococcus jannaschii).